Here is a 497-residue protein sequence, read N- to C-terminus: Guanosine-5'-triphosphate,3'-diphosphate pyrophosphatase (497 aa).

It belongs to the GppA/Ppx family. GppA subfamily.

The enzyme catalyses guanosine 3'-diphosphate 5'-triphosphate + H2O = guanosine 3',5'-bis(diphosphate) + phosphate + H(+). It functions in the pathway purine metabolism; ppGpp biosynthesis; ppGpp from GTP: step 2/2. In terms of biological role, catalyzes the conversion of pppGpp to ppGpp. Guanosine pentaphosphate (pppGpp) is a cytoplasmic signaling molecule which together with ppGpp controls the 'stringent response', an adaptive process that allows bacteria to respond to amino acid starvation, resulting in the coordinated regulation of numerous cellular activities. This chain is Guanosine-5'-triphosphate,3'-diphosphate pyrophosphatase, found in Vibrio parahaemolyticus serotype O3:K6 (strain RIMD 2210633).